The primary structure comprises 1838 residues: Collagen alpha-1(V) chain (1838 aa).

Residues 1 to 37 (MDVHTRWKARSALRPGAPLLPPLLLLLLWAPPPSRAA) form the signal peptide. Positions 72 to 244 (DVAYRVTKDA…DYCEHYSPDC (173 aa)) constitute a Laminin G-like domain. Residues 231–443 (RAAYDYCEHY…MPANQDTIYE (213 aa)) form a nonhelical region region. Residues tyrosine 234, tyrosine 236, tyrosine 240, tyrosine 262, and tyrosine 263 each carry the sulfotyrosine modification. 5 disordered regions span residues 242–269 (PDCD…GDGE), 281–457 (EDPE…QKGE), 470–520 (PPGP…GTML), 526–545 (FGGG…QESQ), and 559–1574 (GPAG…EVIQ). Over residues 258-269 (NPDEYYTEGDGE) the composition is skewed to acidic residues. Residues 285 to 304 (DLGKEPTPSKKPVEAAKETT) show a composition bias toward basic and acidic residues. The span at 309-323 (ELTPTPTEAAPMPET) shows a compositional bias: low complexity. Tyrosine 338, tyrosine 340, tyrosine 346, and tyrosine 347 each carry sulfotyrosine. The span at 377-388 (PTSTADTSNSSN) shows a compositional bias: polar residues. A compositionally biased stretch (acidic residues) spans 396–406 (GADDLEGEFTE). A sulfotyrosine mark is found at tyrosine 416, tyrosine 417, tyrosine 420, and tyrosine 421. Positions 417 to 428 (YDPYYDPTSSPS) are enriched in low complexity. The tract at residues 444–558 (GIGGPRGEKG…ILQQARLALR (115 aa)) is interrupted collagenous region. The segment covering 470–485 (PPGPEGPAGLPGPPGT) has biased composition (pro residues). Over residues 506 to 520 (LPGADGLPGPPGTML) the composition is skewed to low complexity. Positions 559–1570 (GPAGPMGLTG…GPPGPPGPPG (1012 aa)) are triple-helical region. Hydroxyproline is present on residues proline 570 and proline 576. The span at 587 to 597 (DVGPQGPRGVQ) shows a compositional bias: low complexity. At proline 621 the chain carries Hydroxyproline. Lysine 627 bears the 5-hydroxylysine mark. Proline 639 is subject to Hydroxyproline. A 5-hydroxylysine modification is found at lysine 642. Hydroxyproline occurs at positions 648, 654, 657, 675, and 678. Residues 671 to 686 (PRGLPGEPGPRGLLGP) are compositionally biased toward low complexity. The residue at position 687 (lysine 687) is a 5-hydroxylysine. Residues 687–696 (KGPPGPPGPP) show a composition bias toward pro residues. Hydroxyproline occurs at positions 690, 696, and 705. Position 708 is a 5-hydroxylysine (lysine 708). A hydroxyproline mark is found at proline 717, proline 720, proline 726, and proline 732. The segment covering 722-741 (QQGNPGAQGLPGPQGAIGPP) has biased composition (low complexity). Lysine 744 carries the 5-hydroxylysine modification. Low complexity predominate over residues 747–756 (LGKPGLPGMP). Hydroxyproline occurs at positions 750, 756, 762, 765, and 771. 5-hydroxylysine is present on lysine 774. A hydroxyproline mark is found at proline 780 and proline 789. A 5-hydroxylysine mark is found at lysine 795, lysine 804, lysine 807, and lysine 810. Hydroxyproline is present on proline 816. Lysine 819 bears the 5-hydroxylysine mark. Proline 834 bears the Hydroxyproline mark. Over residues 837–846 (RGEDGPEGPK) the composition is skewed to basic and acidic residues. At lysine 846 the chain carries 5-hydroxylysine. The residue at position 861 (proline 861) is a Hydroxyproline. Lysine 864 bears the 5-hydroxylysine mark. Residues 867–876 (LGVPGLPGYP) are compositionally biased toward low complexity. Hydroxyproline occurs at positions 870, 873, and 876. At lysine 882 the chain carries 5-hydroxylysine. Hydroxyproline occurs at positions 888 and 891. Lysine 897 is modified (5-hydroxylysine). Residues proline 903 and proline 906 each carry the hydroxyproline modification. Positions 908-917 (PRGQRGPTGP) are enriched in low complexity. A hydroxyproline mark is found at proline 930 and proline 945. Low complexity-rich tracts occupy residues 971 to 990 (KDGL…QGKT) and 999 to 1011 (VGPQ…TGPM). Hydroxyproline occurs at positions 1017, 1020, 1023, and 1029. A compositionally biased stretch (low complexity) spans 1088-1104 (SPGERGPAGAAGPIGIP). The span at 1106-1115 (RPGPQGPPGP) shows a compositional bias: pro residues. Positions 1116–1140 (AGEKGAPGEKGPQGPAGRDGLQGPV) are enriched in low complexity. Hydroxyproline is present on residues proline 1221 and proline 1224. Residues 1259–1268 (PSGAPGADGP) show a composition bias toward low complexity. Composition is skewed to pro residues over residues 1380–1398 (TGEP…PGPA) and 1454–1469 (SPGP…PPGL). Proline 1467 and proline 1470 each carry hydroxyproline. Positions 1485–1494 (PGLIGLIGPP) are enriched in low complexity. The span at 1526–1541 (PIGPPGPPGLPGPPGP) shows a compositional bias: pro residues. The span at 1542–1554 (KGAKGSSGPTGPK) shows a compositional bias: low complexity. A compositionally biased stretch (pro residues) spans 1560 to 1569 (PGPPGPPGPP). The tract at residues 1571-1605 (EVIQPLPIQASRTRRNIDASQLLDDGNGENYVDYA) is nonhelical region. Residues tyrosine 1601 and tyrosine 1604 each carry the sulfotyrosine modification. Positions 1606–1838 (DGMEEIFGSL…FEVGPACFMG (233 aa)) are cleaved as a propeptide — C-terminal propeptide. A Fibrillar collagen NC1 domain is found at 1609–1837 (EEIFGSLNSL…GFEVGPACFM (229 aa)). 3 cysteine pairs are disulfide-bonded: cysteine 1639–cysteine 1671, cysteine 1680–cysteine 1835, and cysteine 1746–cysteine 1789. Ca(2+) contacts are provided by aspartate 1657, asparagine 1659, glutamine 1660, cysteine 1662, and aspartate 1665.

It belongs to the fibrillar collagen family. Trimers of two alpha 1(V) and one alpha 2(V) chains in most tissues and trimers of one alpha 1(V), one alpha 2(V), and one alpha 3(V) chains in placenta. Interacts with CSPG4. In terms of processing, prolines at the third position of the tripeptide repeating unit (G-X-Y) are hydroxylated in some or all of the chains. Sulfated on 40% of tyrosines.

It is found in the secreted. Its subcellular location is the extracellular space. The protein localises to the extracellular matrix. Its function is as follows. Type V collagen is a member of group I collagen (fibrillar forming collagen). It is a minor connective tissue component of nearly ubiquitous distribution. Type V collagen binds to DNA, heparan sulfate, thrombospondin, heparin, and insulin. This chain is Collagen alpha-1(V) chain (COL5A1), found in Homo sapiens (Human).